Reading from the N-terminus, the 360-residue chain is Cannabinoid receptor 2 (360 aa).

Over 1–33 (MAGCRELELTNGSNGGLEFNPMKEYMILSDAQQ) the chain is Extracellular. N11 carries N-linked (GlcNAc...) asparagine glycosylation. Residues 34-59 (IAVAVLCTLMGLLSALENVAVLYLIL) form a helical membrane-spanning segment. At 60-71 (SSQRLRRKPSYL) the chain is on the cytoplasmic side. Residues 72-92 (FIGSLAGADFLASVIFACNFV) traverse the membrane as a helical segment. Residues 93 to 104 (IFHVFHGVDSRN) lie on the Extracellular side of the membrane. Residues 105–129 (IFLLKIGSVTMTFTASVGSLLLTAV) traverse the membrane as a helical segment. The Cytoplasmic portion of the chain corresponds to 130–149 (DRYLCLCYPPTYKALVTRGR). The helical transmembrane segment at 150–172 (ALVALGVMWVLSALISYLPLMGW) threads the bilayer. Over 173–188 (TCCPSPCSELFPLIPN) the chain is Extracellular. A helical transmembrane segment spans residues 189 to 214 (DYLLGWLLFIAILFSGIIYTYGYVLW). Topologically, residues 215 to 246 (KAHQHVASLAEHQDRQVPGIARMRLDVRLAKT) are cytoplasmic. Residues 247 to 267 (LGLVMAVLLICWFPALALMGH) traverse the membrane as a helical segment. Residues 268-279 (SLVTTLSDKVKE) are Extracellular-facing. Residues 280 to 301 (AFAFCSMLCLVNSMINPIIYAL) form a helical membrane-spanning segment. Residues 302–360 (RSGEIRSAAQHCLTGWKKYLQGLGSEGKEEAPKSSVTETEAEVKTTTGPGSRTPGCSNC) lie on the Cytoplasmic side of the membrane. The segment at 327–360 (EGKEEAPKSSVTETEAEVKTTTGPGSRTPGCSNC) is disordered. Phosphoserine is present on residues S335 and S336. The residue at position 338 (T338) is a Phosphothreonine. The segment covering 349-360 (GPGSRTPGCSNC) has biased composition (polar residues). Phosphoserine is present on S352.

The protein belongs to the G-protein coupled receptor 1 family. Constitutively phosphorylated on Ser-352; phosphorylation increases cell internalization and desensitizes the receptor. In terms of tissue distribution, expressed in spleen and brain by neurons and glial cells (at protein level). Expressed in lung, testis and thymus but not in heart, liver or kidney. Expressed in cerebellum, cortex and brainstem.

It is found in the cell membrane. It localises to the cell projection. The protein localises to the dendrite. The protein resides in the perikaryon. Heterotrimeric G protein-coupled receptor for endocannabinoid 2-arachidonoylglycerol mediating inhibition of adenylate cyclase. May function in inflammatory response, nociceptive transmission and bone homeostasis. In Rattus norvegicus (Rat), this protein is Cannabinoid receptor 2 (Cnr2).